Reading from the N-terminus, the 157-residue chain is N5-carboxyaminoimidazole ribonucleotide mutase (157 aa).

Positions 8, 11, and 38 each coordinate substrate.

It belongs to the AIR carboxylase family. Class I subfamily.

The enzyme catalyses 5-carboxyamino-1-(5-phospho-D-ribosyl)imidazole + H(+) = 5-amino-1-(5-phospho-D-ribosyl)imidazole-4-carboxylate. The protein operates within purine metabolism; IMP biosynthesis via de novo pathway; 5-amino-1-(5-phospho-D-ribosyl)imidazole-4-carboxylate from 5-amino-1-(5-phospho-D-ribosyl)imidazole (N5-CAIR route): step 2/2. In terms of biological role, catalyzes the conversion of N5-carboxyaminoimidazole ribonucleotide (N5-CAIR) to 4-carboxy-5-aminoimidazole ribonucleotide (CAIR). This chain is N5-carboxyaminoimidazole ribonucleotide mutase, found in Methanocaldococcus jannaschii (strain ATCC 43067 / DSM 2661 / JAL-1 / JCM 10045 / NBRC 100440) (Methanococcus jannaschii).